The chain runs to 100 residues: Replication restart protein PriB (100 aa).

Residues 4-99 (TNLVSLAALI…LRIQNIKEYK (96 aa)) enclose the SSB domain.

Belongs to the PriB family. Homodimer. Component of the replication restart primosome. Primosome assembly occurs via a 'hand-off' mechanism. PriA binds to replication forks, subsequently PriB then DnaT bind; DnaT then displaces ssDNA to generate the helicase loading substrate. Interacts with PriA with high affinity, independent of DNA presence.

PriA:PriB complex-catalyzed duplex DNA winding is inhibited by CGS 15943 (CHEBI:131351); PriA is the drug target. Its function is as follows. Stimulates the DNA unwinding activity of PriA helicase, which does not seem to require single-stranded (ss)DNA-binding by PriB. Activates DNA-dependent ATP hydrolysis catalyzed by PriA. Weakly binds ssDNA. Weakly binds double-stranded (ds)DNA, a partial duplex DNA with a 3' ssDNA overhang, and a forked DNA structure with fully duplex leading and lagging strand arms in vitro. Functionally, involved in the restart of stalled replication forks, which reloads the replicative helicase on sites other than the origin of replication; the PriA-PriB pathway is the major replication restart pathway. During primosome assembly it facilitates complex formation between PriA and DnaT on DNA; stabilizes PriA on DNA. Stimulates the DNA unwinding activity of PriA helicase. The sequence is that of Replication restart protein PriB from Neisseria gonorrhoeae (strain ATCC 700825 / FA 1090).